The primary structure comprises 209 residues: MPVAVMAESAFSFKKLLDQCENQELEAPGGIATPPVYGQLLALYLLHNDMNNARYLWKRIPPAIKSANSELGGIWSVGQRIWQRDFPGIYTTINAHQWSETVQPIMEALRDATRRRAFALVSQAYTSIVADDFAAFVGLPVEEAVKGILEQGWQADSTTRMVLPRKPVAGALDVSFNKFIPLSEPAPVPPIPNEQQLARLTDYVAFLEN.

The 172-residue stretch at 8–179 (ESAFSFKKLL…GALDVSFNKF (172 aa)) folds into the PCI domain. A Phosphoserine modification is found at serine 175.

It belongs to the CSN8 family. In terms of assembly, component of the CSN complex, composed of COPS1/GPS1, COPS2, COPS3, COPS4, COPS5, COPS6, COPS7 (COPS7A or COPS7B), COPS8 and COPS9. In the complex, it probably interacts directly with COPS3, COPS4 and COPS7 (COPS7A or COPS7B).

It localises to the cytoplasm. It is found in the nucleus. Functionally, component of the COP9 signalosome complex (CSN), a complex involved in various cellular and developmental processes. The CSN complex is an essential regulator of the ubiquitin (Ubl) conjugation pathway by mediating the deneddylation of the cullin subunits of SCF-type E3 ligase complexes, leading to decrease the Ubl ligase activity of SCF-type complexes such as SCF, CSA or DDB2. The complex is also involved in phosphorylation of p53/TP53, c-jun/JUN, IkappaBalpha/NFKBIA, ITPK1 and IRF8/ICSBP, possibly via its association with CK2 and PKD kinases. CSN-dependent phosphorylation of TP53 and JUN promotes and protects degradation by the Ubl system, respectively. The sequence is that of COP9 signalosome complex subunit 8 (COPS8) from Pongo abelii (Sumatran orangutan).